A 141-amino-acid polypeptide reads, in one-letter code: Hemoglobin subunit alpha-2 (141 aa).

Positions 1-141 (VLSPADKNNV…VSTVLTSKYR (141 aa)) constitute a Globin domain. His-58 contributes to the O2 binding site. His-87 lines the heme b pocket.

Belongs to the globin family. As to quaternary structure, heterotetramer of two alpha chains and two beta chains. Red blood cells.

Its function is as follows. Involved in oxygen transport from the lung to the various peripheral tissues. In Varecia variegata (Black-and-white ruffed lemur), this protein is Hemoglobin subunit alpha-2.